The chain runs to 132 residues: Small ribosomal subunit protein uS8 (132 aa).

Belongs to the universal ribosomal protein uS8 family. In terms of assembly, part of the 30S ribosomal subunit. Contacts proteins S5 and S12.

Functionally, one of the primary rRNA binding proteins, it binds directly to 16S rRNA central domain where it helps coordinate assembly of the platform of the 30S subunit. This chain is Small ribosomal subunit protein uS8, found in Clostridium acetobutylicum (strain ATCC 824 / DSM 792 / JCM 1419 / IAM 19013 / LMG 5710 / NBRC 13948 / NRRL B-527 / VKM B-1787 / 2291 / W).